The chain runs to 145 residues: Bacilliredoxin GK2368 (145 aa).

The protein belongs to the bacilliredoxin family.

The protein is Bacilliredoxin GK2368 of Geobacillus kaustophilus (strain HTA426).